A 60-amino-acid polypeptide reads, in one-letter code: UPF0434 protein Vapar_2640 (60 aa).

Belongs to the UPF0434 family.

The polypeptide is UPF0434 protein Vapar_2640 (Variovorax paradoxus (strain S110)).